We begin with the raw amino-acid sequence, 136 residues long: Histone H3 (136 aa).

Positions 1–43 are disordered; that stretch reads MARTKQTARKSTGGKAPRKQLATKAARKSAPASGGVKKPHRFR. N6-methylated lysine is present on Lys-5. The residue at position 10 (Lys-10) is an N6-acetyllysine; alternate. Lys-10 carries the N6-methylated lysine; alternate modification. Ser-11 is modified (phosphoserine). Thr-12 is modified (phosphothreonine). Position 15 is an N6-acetyllysine (Lys-15). Residues Lys-19 and Lys-24 each carry the N6-acetyllysine; alternate modification. N6-methylated lysine; alternate is present on residues Lys-19 and Lys-24. The residue at position 28 (Lys-28) is an N6-methylated lysine. Ser-29 is modified (phosphoserine). An N6-methylated lysine modification is found at Lys-37.

The protein belongs to the histone H3 family. In terms of assembly, the nucleosome is a histone octamer containing two molecules each of H2A, H2B, H3 and H4 assembled in one H3-H4 heterotetramer and two H2A-H2B heterodimers. The octamer wraps approximately 147 bp of DNA. Acetylation is generally linked to gene activation. Can be acetylated to form H3K9ac, H3K14ac, H3K18ac and H3K23ac. H3K9ac could compete with H3K9me and prevent gene silencing. H3K9ac is restricted to euchromatin. In terms of processing, methylated to form mainly H3K4me, H3K9me, H3K18me, H3K23me, H3K27me and H3K36me. H3K4me1/2/3, H3K9me3, H3K27me3 and H3K36me1/2/3 are typical marks for euchromatin, whereas heterochromatic chromocenters are enriched in H3K9me1/2 and H3K27me1/2. H2BK143ub1 is probably prerequisite for H3K4me. Post-translationally, can be phosphorylated to form H3S10ph, H3T11ph and H3S28ph.

The protein resides in the nucleus. It is found in the chromosome. In terms of biological role, core component of nucleosome. Nucleosomes wrap and compact DNA into chromatin, limiting DNA accessibility to the cellular machineries which require DNA as a template. Histones thereby play a central role in transcription regulation, DNA repair, DNA replication and chromosomal stability. DNA accessibility is regulated via a complex set of post-translational modifications of histones, also called histone code, and nucleosome remodeling. The polypeptide is Histone H3 (Griffithsia japonica (Red alga)).